The primary structure comprises 2009 residues: Sodium channel protein type 1 subunit alpha (2009 aa).

Over methionine 1–serine 128 the chain is Cytoplasmic. Residues arginine 28 to glycine 48 are compositionally biased toward basic and acidic residues. The tract at residues arginine 28–asparagine 60 is disordered. One copy of the I repeat lies at isoleucine 110–glutamine 454. The helical transmembrane segment at leucine 129–threonine 146 threads the bilayer. Residues methionine 147 to aspartate 152 lie on the Extracellular side of the membrane. A helical membrane pass occupies residues tryptophan 153 to glycine 177. Residues phenylalanine 178 to aspartate 188 are Cytoplasmic-facing. The helical transmembrane segment at proline 189–glutamate 205 threads the bilayer. Topologically, residues phenylalanine 206–serine 213 are extracellular. The helical transmembrane segment at alanine 214 to threonine 235 threads the bilayer. The Cytoplasmic portion of the chain corresponds to isoleucine 236 to lysine 245. A helical membrane pass occupies residues lysine 246 to phenylalanine 269. Topologically, residues methionine 270 to serine 369 are extracellular. Disulfide bonds link cysteine 277-cysteine 345 and cysteine 336-cysteine 351. N-linked (GlcNAc...) asparagine glycans are attached at residues asparagine 295, asparagine 301, asparagine 306, and asparagine 338. The pore-forming intramembrane region spans tryptophan 370 to tryptophan 384. The Extracellular portion of the chain corresponds to glutamate 385–lysine 397. Residues threonine 398–alanine 423 form a helical membrane-spanning segment. The Cytoplasmic segment spans residues methionine 424–proline 768. The segment at glutamine 455–serine 528 is disordered. Residues glutamate 456–alanine 466 are compositionally biased toward low complexity. Serine 470 is subject to Phosphoserine. Positions leucine 479 to lysine 492 are enriched in low complexity. The span at lysine 495–glutamine 506 shows a compositional bias: basic residues. Residues lysine 507–serine 528 show a composition bias toward basic and acidic residues. A phosphoserine mark is found at serine 523, serine 525, serine 550, serine 551, serine 607, and serine 730. Positions valine 584–arginine 627 are disordered. Residues aspartate 593 to serine 607 show a composition bias toward basic and acidic residues. One copy of the II repeat lies at cysteine 750–glycine 1022. The helical transmembrane segment at phenylalanine 769 to methionine 787 threads the bilayer. At glutamate 788–asparagine 797 the chain is on the extracellular side. A helical membrane pass occupies residues histidine 798–isoleucine 820. Residues alanine 821–glutamate 830 lie on the Cytoplasmic side of the membrane. A helical transmembrane segment spans residues glycine 831–leucine 849. The Extracellular portion of the chain corresponds to alanine 850 to glycine 854. Residues leucine 855–proline 874 traverse the membrane as a helical segment. The Cytoplasmic portion of the chain corresponds to threonine 875–glycine 891. A helical membrane pass occupies residues asparagine 892–phenylalanine 912. At glycine 913 to phenylalanine 938 the chain is on the extracellular side. Cysteine 921 and cysteine 927 are joined by a disulfide. The segment at residues histidine 939–tryptophan 952 is an intramembrane region (pore-forming). Residues isoleucine 953–glutamine 965 lie on the Extracellular side of the membrane. A disulfide bridge connects residues cysteine 959 and cysteine 968. A helical transmembrane segment spans residues alanine 966–leucine 992. Topologically, residues serine 993–asparagine 1218 are cytoplasmic. The disordered stretch occupies residues threonine 1129 to alanine 1163. One copy of the III repeat lies at arginine 1200–leucine 1514. Residues tryptophan 1219–phenylalanine 1237 traverse the membrane as a helical segment. The Extracellular portion of the chain corresponds to glutamate 1238–threonine 1250. Residues methionine 1251–tyrosine 1276 traverse the membrane as a helical segment. Over glutamine 1277–threonine 1278 the chain is Cytoplasmic. The helical transmembrane segment at tyrosine 1279–leucine 1304 threads the bilayer. Topologically, residues glycine 1305–lysine 1313 are extracellular. A helical membrane pass occupies residues serine 1314 to glycine 1332. Residues methionine 1333–proline 1345 lie on the Cytoplasmic side of the membrane. Residues serine 1346 to phenylalanine 1369 traverse the membrane as a helical segment. Residues alanine 1370–phenylalanine 1415 are Extracellular-facing. The cysteines at positions 1376 and 1396 are disulfide-linked. An intramembrane region (pore-forming) is located at residues aspartate 1416–glycine 1433. Over tryptophan 1434 to leucine 1457 the chain is Extracellular. The helical transmembrane segment at tyrosine 1458–isoleucine 1483 threads the bilayer. Residues aspartate 1484–glutamine 1541 lie on the Cytoplasmic side of the membrane. Serine 1516 carries the phosphoserine; by PKC modification. The IV repeat unit spans residues isoleucine 1523–glutamine 1821. A helical transmembrane segment spans residues valine 1542 to valine 1560. Residues glutamate 1561 to serine 1571 lie on the Extracellular side of the membrane. An S1-S2 loop of repeat IV region spans residues glutamate 1561 to serine 1571. The chain crosses the membrane as a helical span at residues isoleucine 1572–isoleucine 1593. Over serine 1594–threonine 1601 the chain is Cytoplasmic. The helical transmembrane segment at isoleucine 1602–glutamate 1623 threads the bilayer. The segment at methionine 1619 to arginine 1636 is S3b-S4 loop of repeat IV. Residues leucine 1624–arginine 1636 are Extracellular-facing. The chain crosses the membrane as a helical span at residues valine 1637–glycine 1655. The Cytoplasmic portion of the chain corresponds to isoleucine 1656–methionine 1665. Residues serine 1666–glycine 1688 form a helical membrane-spanning segment. The Extracellular portion of the chain corresponds to methionine 1689–glycine 1711. Residues asparagine 1712–tryptophan 1726 constitute an intramembrane region (pore-forming). The Extracellular portion of the chain corresponds to aspartate 1727–proline 1759. A disulfide bridge links cysteine 1741 with cysteine 1756. A helical membrane pass occupies residues serine 1760–asparagine 1788. Residues phenylalanine 1789–lysine 2009 are Cytoplasmic-facing. The IQ domain maps to glutamate 1915–lysine 1944. A disordered region spans residues proline 1984–lysine 2009. A compositionally biased stretch (basic and acidic residues) spans arginine 1988 to lysine 2009.

This sequence belongs to the sodium channel (TC 1.A.1.10) family. Nav1.1/SCN1A subfamily. The Nav1.1 voltage-gated sodium channel consists of an ion-conducting alpha subunit SCN1A which is functional on its own regulated by one or more beta-1 (SCN1B), beta-2 (SCN2B), beta-3 (SCN3B) and beta-4 (SCN4B) subunits. SCN1B and SCN3B are non-covalently associated with SCN1A. SCN2B and SCN4B are disulfide-linked to SCN1A. SCN1B regulates both the expression at the plasma membrane and the voltage dependence of Nav1.1 inactivation. SCN3B and SCN4B reduce Nav1.1 conductance. Probably interacts with TMEM233; modulates the gating properties of NaV1.1. Interacts with FGF13; regulates the steady-state inactivation of Nav.1.1. Phosphorylation at Ser-1516 by PKC in a highly conserved cytoplasmic loop slows inactivation of the sodium channel and reduces peak sodium currents. As to expression, present in cerebellar Purkinje neurons (at protein level). Expressed by myelinated, non-C-fiber neurons in sensory ganglia.

The protein resides in the cell membrane. The enzyme catalyses Na(+)(in) = Na(+)(out). Activated by the spider toxins Hm1a and Hm1b (H.maculata, AC P60992 and AC P0DOC5) eliciting acute pain and mechanical allodynia. Its function is as follows. Pore-forming subunit of Nav1.1, a voltage-gated sodium (Nav) channel that directly mediates the depolarizing phase of action potentials in excitable membranes. Navs, also called VGSCs (voltage-gated sodium channels) or VDSCs (voltage-dependent sodium channels), operate by switching between closed and open conformations depending on the voltage difference across the membrane. In the open conformation they allow Na(+) ions to selectively pass through the pore, along their electrochemical gradient. The influx of Na(+) ions provokes membrane depolarization, initiating the propagation of electrical signals throughout cells and tissues. By regulating the excitability of neurons, ensures that they respond appropriately to synaptic inputs, maintaining the balance between excitation and inhibition in brain neural circuits. Nav1.1 plays a role in controlling the excitability and action potential propagation from somatosensory neurons, thereby contributing to the sensory perception of mechanically-induced pain. The sequence is that of Sodium channel protein type 1 subunit alpha from Mus musculus (Mouse).